The following is a 394-amino-acid chain: A-type flagellin (394 aa).

Belongs to the bacterial flagellin family. Post-translationally, phosphorylated on tyrosine residue(s). Flagellin from strain 5939 but not from strain 170018 is glycosylated.

Its subcellular location is the secreted. It is found in the bacterial flagellum. Flagellin is the subunit protein which polymerizes to form the filaments of bacterial flagella. This Pseudomonas aeruginosa protein is A-type flagellin (fliC).